We begin with the raw amino-acid sequence, 518 residues long: 2-isopropylmalate synthase (518 aa).

A Pyruvate carboxyltransferase domain is found at 5–267; sequence VIIFDTTLRD…STKIKHKEIY (263 aa). Residues Asp14, His202, His204, and Asn238 each contribute to the Mn(2+) site. The interval 392–518 is regulatory domain; the sequence is SLSFFSVQSI…KLKKLKKINN (127 aa).

Belongs to the alpha-IPM synthase/homocitrate synthase family. LeuA type 1 subfamily. As to quaternary structure, homodimer. The cofactor is Mn(2+).

The protein resides in the cytoplasm. It carries out the reaction 3-methyl-2-oxobutanoate + acetyl-CoA + H2O = (2S)-2-isopropylmalate + CoA + H(+). It functions in the pathway amino-acid biosynthesis; L-leucine biosynthesis; L-leucine from 3-methyl-2-oxobutanoate: step 1/4. Catalyzes the condensation of the acetyl group of acetyl-CoA with 3-methyl-2-oxobutanoate (2-ketoisovalerate) to form 3-carboxy-3-hydroxy-4-methylpentanoate (2-isopropylmalate). In Buchnera aphidicola subsp. Rhopalosiphum padi, this protein is 2-isopropylmalate synthase.